A 1512-amino-acid polypeptide reads, in one-letter code: ATP-dependent permease YOR1 (1512 aa).

Residues 1 to 68 are disordered; the sequence is MSPLLPTHWG…KGMKETEDGG (68 aa). Polar residues predominate over residues 13–29; sequence APQNEPTLPSPSHSVST. The span at 31 to 65 shows a compositional bias: basic and acidic residues; that stretch reads VGDEEKLRRSEGSDGEDRINLDSNKYDVKGMKETE. 5 consecutive transmembrane segments (helical) span residues 229–249, 288–308, 363–385, 475–495, and 507–527; these read ASLAMSLLDVFGWFFMSAGFI, GPGIGAAIGLLLLLICSSLGM, FAAGFSHMLWTAPVQMIVIIIIL, GMTAIAMSLPILAAILSFITY, and IFTVITLFNLMRMPLMMWPMT. Positions 246 to 533 constitute an ABC transmembrane type-1 1 domain; that stretch reads AGFIKVFGDT…WPMTLSSTAD (288 aa). The segment at 594-656 is disordered; the sequence is VLNGGKPGGP…SAPGIDEEIS (63 aa). The segment covering 619 to 643 has biased composition (low complexity); that stretch reads AEEIQAETAAGQPGAGEASAEGQGQ. The 221-residue stretch at 651–871 folds into the ABC transporter 1 domain; that stretch reads IDEEISEKKE…NGAFAKLIKE (221 aa). 683-690 provides a ligand contact to ATP; the sequence is GAIGSGKS. 4 consecutive transmembrane segments (helical) span residues 937-957, 974-994, 1067-1087, and 1167-1187; these read GVFMLPLLFFCIVVAQSFYVI, NGFYMGIYAGLGVGLAIALFF, VILLAIIEPYFLIAMAVVSLL, and FLGSLLSFSVAIIVVCSSSVS. The ABC transmembrane type-1 2 domain maps to 943 to 1217; the sequence is LLFFCIVVAQ…LVRQIAEVEN (275 aa). In terms of domain architecture, ABC transporter 2 spans 1255-1496; sequence IEFKDVRMRY…GGIFTEMCSK (242 aa). Residue 1289–1296 coordinates ATP; the sequence is GRTGAGKS.

The protein belongs to the ABC transporter superfamily. ABCC family. Conjugate transporter (TC 3.A.1.208) subfamily.

It is found in the extracellular vesicle membrane. The protein localises to the secreted. Its function is as follows. Transmembrane transporter. May play a role in the packaging or formation of extracellular vesicles (EVs), and in the export of virulence factors from EVs. Required for efficient non-lytic exocytosis from host macrophages, the process by which the yeast escapes host macrophages with both host cell and pathogen remaining viable. This chain is ATP-dependent permease YOR1, found in Cryptococcus neoformans var. grubii serotype A (strain H99 / ATCC 208821 / CBS 10515 / FGSC 9487) (Filobasidiella neoformans var. grubii).